We begin with the raw amino-acid sequence, 258 residues long: PHD finger protein ALFIN-LIKE 5 (258 aa).

The segment at 143 to 205 (AKKQTKEKAP…EEEERDNTLC (63 aa)) is disordered. Over residues 152–165 (PNSTNKPNKPSSKM) the composition is skewed to polar residues. The span at 184–200 (DDDESGDEYADEEEEER) shows a compositional bias: acidic residues. Residues 202-254 (NTLCGSCGTNDGKDEFWICCDSCERWYHGKCVKITPARAEHIKHYKCPDCGNK) form a PHD-type zinc finger.

This sequence belongs to the Alfin family.

It is found in the nucleus. In terms of biological role, histone-binding component that specifically recognizes H3 tails trimethylated on 'Lys-4' (H3K4me3), which mark transcription start sites of virtually all active genes. In Oryza sativa subsp. indica (Rice), this protein is PHD finger protein ALFIN-LIKE 5.